Here is a 911-residue protein sequence, read N- to C-terminus: Band 3 anion transport protein (911 aa).

Position 1 is an N-acetylmethionine (Met-1). Acidic residues predominate over residues 1 to 26 (MEELQDDYEDMMEENLEQEEYEDPDI). Residues 1 to 40 (MEELQDDYEDMMEENLEQEEYEDPDIPESQMEEPAAHDTE) are disordered. At 1-403 (MEELQDDYED…LSDITDAFSP (403 aa)) the chain is on the cytoplasmic side. Residues Tyr-8, Tyr-21, and Tyr-46 each carry the phosphotyrosine modification. The (Microbial infection) Interaction with P.falciparum (isolate K1) FBPA stretch occupies residues 13-31 (EENLEQEEYEDPDIPESQM). A globular region spans residues 55–290 (HKVYVELQEL…LGRAAATLMS (236 aa)). The interval 176–185 (AVLTRSGDPS) is interaction with ANK1. Residues Ser-185 and Ser-350 each carry the phosphoserine modification. The interval 304-357 (RGELLHSLEGFLDCSLVLPPTDAPSEQALLSLVPVQRELLRRRYQSSPAKPDSS) is dimerization arm. Tyr-359 is subject to Phosphotyrosine. A helical transmembrane segment spans residues 404–427 (QVLAAVIFIYFAALSPAITFGGLL). At 428–435 (GEKTRNQM) the chain is on the extracellular side. A helical membrane pass occupies residues 436-456 (GVSELLISTAVQGILFALLGA). The Cytoplasmic portion of the chain corresponds to 457-459 (QPL). Residues 460-476 (LVVGFSGPLLVFEEAFF) traverse the membrane as a discontinuously helical segment. Residues 477-485 (SFCETNGLE) lie on the Extracellular side of the membrane. Residues 486–506 (YIVGRVWIGFWLILLVVLVVA) traverse the membrane as a helical segment. The Cytoplasmic portion of the chain corresponds to 507–518 (FEGSFLVRFISR). Residues 519–541 (YTQEIFSFLISLIFIYETFSKLI) traverse the membrane as a helical segment. The Extracellular portion of the chain corresponds to 542–570 (KIFQDHPLQKTYNYNVLMVPKPQGPLPNT). Residues 559–630 (MVPKPQGPLP…DFFIQDTYTQ (72 aa)) are involved in anion transport. The chain crosses the membrane as a helical span at residues 571-591 (ALLSLVLMAGTFFFAMMLRKF). Residues 592 to 602 (KNSSYFPGKLR) are Cytoplasmic-facing. The chain crosses the membrane as a helical span at residues 603–623 (RVIGDFGVPISILIMVLVDFF). The Extracellular segment spans residues 624-663 (IQDTYTQKLSVPDGFKVSNSSARGWVIHPLGLRSEFPIWM). Asn-642 carries an N-linked (GlcNAc...) (complex) asparagine glycan. A helical transmembrane segment spans residues 664–684 (MFASALPALLVFILIFLESQI). The Cytoplasmic portion of the chain corresponds to 685 to 700 (TTLIVSKPERKMVKGS). A helical membrane pass occupies residues 701-719 (GFHLDLLLVVGMGGVAALF). Residues 720–737 (GMPWLSATTVRSVTHANA) form a discontinuously helical membrane-spanning segment. The segment at 720–761 (GMPWLSATTVRSVTHANALTVMGKASTPGAAAQIQEVKEQRI) is (Microbial infection) 5ABC region; interaction with P.falciparum (isolate 3D7) MSP9. Residues 738-760 (LTVMGKASTPGAAAQIQEVKEQR) are Cytoplasmic-facing. The next 2 membrane-spanning stretches (helical) occupy residues 761 to 781 (ISGL…PILS) and 782 to 800 (RIPL…VTSL). The Cytoplasmic portion of the chain corresponds to 801–838 (SGIQLFDRILLLFKPPKYHPDVPYVKRVKTWRMHLFTG). An intramembrane region (discontinuously helical) is located at residues 839–869 (IQIICLAVLWVVKSTPASLALPFVLILTVPL). Residue Cys-843 is the site of S-palmitoyl cysteine attachment. Topologically, residues 870–911 (RRVLLPLIFRNVELQCLDADDAKATFDEEEGRDEYDEVAMPV) are cytoplasmic. Residue Tyr-904 is modified to Phosphotyrosine.

Belongs to the anion exchanger (TC 2.A.31) family. A dimer in solution, but in its membrane environment, it exists primarily as a mixture of dimers and tetramers and spans the membrane asymmetrically. Component of the ankyrin-1 complex in the erythrocyte, composed of ANK1, RHCE, RHAG, SLC4A1, EPB42, GYPA, GYPB and AQP1. Interacts with STOM; this interaction positively regulates SLC4A1 activity. Interacts with GYPA; a GYPA monomer is bound at each end of the SLC4A1 dimer forming a heterotetramer. Three SLC4A1 dimers (Band 3-I, Band 3-II and Band 3-III) participates in the ankyrin-1 complex. Interacts (via the cytoplasmic domain) with EPB42; this interaction is mediated by the SLC4A1 Band 3-I dimer. Interacts (via the cytoplasmic domain) directly with ANK1; this interaction is mediated by the SLC4A1 Band 3-II and Band 3-III dimers. As to quaternary structure, interacts with TMEM139. In terms of assembly, (Microbial infection) Interacts (via N-terminus) with P.falciparum (isolate K1) aldolase FBPA; the interaction inhibits FBPA catalytic activity. (Microbial infection) Interacts (via the 5ABC region) with P.falciparum (isolate 3D7) MSP9/ABRA (via N-terminus). As to quaternary structure, (Microbial infection) Interacts (via the 5ABC region) with P.falciparum (isolate 3D7) MSP1 p42 subunit. Phosphorylated on Tyr-8 and Tyr-21 most likely by SYK. PP1-resistant phosphorylation that precedes Tyr-359 and Tyr-904 phosphorylation. In terms of processing, phosphorylated on Tyr-359 and Tyr-904 most likely by LYN. PP1-inhibited phosphorylation that follows Tyr-8 and Tyr-21 phosphorylation. Post-translationally, N-glycosylated. As to expression, detected in erythrocytes (at protein level). Expressed in kidney (at protein level).

The protein localises to the cell membrane. Its subcellular location is the basolateral cell membrane. It carries out the reaction hydrogencarbonate(in) + chloride(out) = hydrogencarbonate(out) + chloride(in). Its activity is regulated as follows. Phenyl isothiocyanate inhibits anion transport in vitro. Functions both as a transporter that mediates electroneutral anion exchange across the cell membrane and as a structural protein. Component of the ankyrin-1 complex of the erythrocyte membrane; required for normal flexibility and stability of the erythrocyte membrane and for normal erythrocyte shape via the interactions of its cytoplasmic domain with cytoskeletal proteins, glycolytic enzymes, and hemoglobin. Functions as a transporter that mediates the 1:1 exchange of inorganic anions across the erythrocyte membrane. Mediates chloride-bicarbonate exchange in the kidney, and is required for normal acidification of the urine. Its function is as follows. (Microbial infection) Acts as a receptor for P.falciparum (isolate 3D7) MSP9 and thus, facilitates merozoite invasion of erythrocytes. Acts as a receptor for P.falciparum (isolate 3D7) MSP1 and thus, facilitates merozoite invasion of erythrocytes. This is Band 3 anion transport protein from Homo sapiens (Human).